A 570-amino-acid chain; its full sequence is Sulfite reductase [NADPH] hemoprotein beta-component (570 aa).

The [4Fe-4S] cluster site is built by Cys434, Cys440, Cys479, and Cys483. Cys483 contacts siroheme.

It belongs to the nitrite and sulfite reductase 4Fe-4S domain family. As to quaternary structure, alpha(8)-beta(8). The alpha component is a flavoprotein, the beta component is a hemoprotein. The cofactor is siroheme. Requires [4Fe-4S] cluster as cofactor.

It carries out the reaction hydrogen sulfide + 3 NADP(+) + 3 H2O = sulfite + 3 NADPH + 4 H(+). It functions in the pathway sulfur metabolism; hydrogen sulfide biosynthesis; hydrogen sulfide from sulfite (NADPH route): step 1/1. Its function is as follows. Component of the sulfite reductase complex that catalyzes the 6-electron reduction of sulfite to sulfide. This is one of several activities required for the biosynthesis of L-cysteine from sulfate. The polypeptide is Sulfite reductase [NADPH] hemoprotein beta-component (Shigella dysenteriae serotype 1 (strain Sd197)).